The chain runs to 430 residues: UDP-glucuronate 4-epimerase 3 (430 aa).

Transmembrane regions (helical) follow at residues 29 to 49 and 90 to 110; these read SVAKLAFWSLVFVGLIFIFFY and GFSVLVTGAAGFVGTHVSAAL. 92 to 123 is a binding site for NAD(+); it reads SVLVTGAAGFVGTHVSAALKRRGDGVLGLDNF. The Proton acceptor role is filled by tyrosine 242.

This sequence belongs to the NAD(P)-dependent epimerase/dehydratase family. As to quaternary structure, homodimer. In roots, leaves, siliques, flowers, pollen and stems.

The protein resides in the golgi apparatus. It localises to the golgi stack membrane. It catalyses the reaction UDP-alpha-D-glucuronate = UDP-alpha-D-galacturonate. Its function is as follows. Involved in the synthesis of the negatively charged monosaccharide that forms the backbone of pectic cell wall components. The polypeptide is UDP-glucuronate 4-epimerase 3 (GAE3) (Arabidopsis thaliana (Mouse-ear cress)).